We begin with the raw amino-acid sequence, 292 residues long: UDP-3-O-acyl-N-acetylglucosamine deacetylase (292 aa).

Zn(2+) contacts are provided by His75, His231, and Asp235. The active-site Proton donor is the His258.

This sequence belongs to the LpxC family. The cofactor is Zn(2+).

It catalyses the reaction a UDP-3-O-[(3R)-3-hydroxyacyl]-N-acetyl-alpha-D-glucosamine + H2O = a UDP-3-O-[(3R)-3-hydroxyacyl]-alpha-D-glucosamine + acetate. It participates in glycolipid biosynthesis; lipid IV(A) biosynthesis; lipid IV(A) from (3R)-3-hydroxytetradecanoyl-[acyl-carrier-protein] and UDP-N-acetyl-alpha-D-glucosamine: step 2/6. Its function is as follows. Catalyzes the hydrolysis of UDP-3-O-myristoyl-N-acetylglucosamine to form UDP-3-O-myristoylglucosamine and acetate, the committed step in lipid A biosynthesis. This is UDP-3-O-acyl-N-acetylglucosamine deacetylase from Nautilia profundicola (strain ATCC BAA-1463 / DSM 18972 / AmH).